Reading from the N-terminus, the 366-residue chain is MKVLVGLSGGVDSAVAAKLLIDQGYDVTGVTMQLLPKLSGIYKEQTDDIEDAKKVADKLGIKHIVYDMRETFKTEIIDYFVEEYKQGRTPNPCFICNSKIKFGLFLEQALKDGFDKIATGHYAKIEKTEIEGDERFLLRQAEDAQKDQSYFLALLTQEQLSRSIFPLGDFTKEKVRSIAEDAGLINAHRPDSQDICFVPDDDYTRVINALAAGSFKEGKFIDTMGNEIGRHKGLQYYTIGQRRGLAIAMGYPVYVVKKDAKTNTVTVGKDEELFAESLIASRVNIILKKTIDKEIDIEVKTRYRQQKKKAKLIPLKNEEFKPTGKFKVEFIEPEKAVAEGQAAVFYTGDYIIGGGIIESVERLGIL.

ATP is bound by residues 6 to 13 (GLSGGVDS) and methionine 32. The active-site Nucleophile is cysteine 96. A disulfide bond links cysteine 96 and cysteine 196. An ATP-binding site is contributed by glycine 120. Residues 146 to 148 (KDQ) are interaction with tRNA. Cysteine 196 acts as the Cysteine persulfide intermediate in catalysis. An interaction with tRNA region spans residues 302-303 (RY).

This sequence belongs to the MnmA/TRMU family.

Its subcellular location is the cytoplasm. The catalysed reaction is S-sulfanyl-L-cysteinyl-[protein] + uridine(34) in tRNA + AH2 + ATP = 2-thiouridine(34) in tRNA + L-cysteinyl-[protein] + A + AMP + diphosphate + H(+). Functionally, catalyzes the 2-thiolation of uridine at the wobble position (U34) of tRNA, leading to the formation of s(2)U34. This Treponema denticola (strain ATCC 35405 / DSM 14222 / CIP 103919 / JCM 8153 / KCTC 15104) protein is tRNA-specific 2-thiouridylase MnmA.